The chain runs to 207 residues: LexA repressor (207 aa).

Positions 29–49 form a DNA-binding region, H-T-H motif; the sequence is VREICSAVDLSSTSTVHGHLA. Catalysis depends on for autocatalytic cleavage activity residues Ser-128 and Lys-166.

This sequence belongs to the peptidase S24 family. In terms of assembly, homodimer.

It catalyses the reaction Hydrolysis of Ala-|-Gly bond in repressor LexA.. Represses a number of genes involved in the response to DNA damage (SOS response), including recA and lexA. In the presence of single-stranded DNA, RecA interacts with LexA causing an autocatalytic cleavage which disrupts the DNA-binding part of LexA, leading to derepression of the SOS regulon and eventually DNA repair. This chain is LexA repressor, found in Lactobacillus johnsonii (strain CNCM I-12250 / La1 / NCC 533).